The following is a 504-amino-acid chain: Glycerol kinase (504 aa).

Thr-12 is a binding site for ADP. ATP is bound by residues Thr-12, Thr-13, and Ser-14. Thr-12 contributes to the sn-glycerol 3-phosphate binding site. Arg-16 serves as a coordination point for ADP. Residues Arg-82, Glu-83, Tyr-134, and Asp-246 each contribute to the sn-glycerol 3-phosphate site. Positions 82, 83, 134, 246, and 247 each coordinate glycerol. Thr-268 and Gly-312 together coordinate ADP. Thr-268, Gly-312, Gln-316, and Gly-413 together coordinate ATP. ADP contacts are provided by Gly-413 and Asn-417.

The protein belongs to the FGGY kinase family.

The enzyme catalyses glycerol + ATP = sn-glycerol 3-phosphate + ADP + H(+). Its pathway is polyol metabolism; glycerol degradation via glycerol kinase pathway; sn-glycerol 3-phosphate from glycerol: step 1/1. Its activity is regulated as follows. Inhibited by fructose 1,6-bisphosphate (FBP). Functionally, key enzyme in the regulation of glycerol uptake and metabolism. Catalyzes the phosphorylation of glycerol to yield sn-glycerol 3-phosphate. The sequence is that of Glycerol kinase from Paenarthrobacter aurescens (strain TC1).